A 347-amino-acid chain; its full sequence is Phenylalanine--tRNA ligase alpha subunit (347 aa).

Glu261 lines the Mg(2+) pocket.

This sequence belongs to the class-II aminoacyl-tRNA synthetase family. Phe-tRNA synthetase alpha subunit type 1 subfamily. Tetramer of two alpha and two beta subunits. The cofactor is Mg(2+).

The protein resides in the cytoplasm. The catalysed reaction is tRNA(Phe) + L-phenylalanine + ATP = L-phenylalanyl-tRNA(Phe) + AMP + diphosphate + H(+). The chain is Phenylalanine--tRNA ligase alpha subunit from Streptococcus uberis (strain ATCC BAA-854 / 0140J).